A 211-amino-acid polypeptide reads, in one-letter code: Arginine exporter protein ArgO (211 aa).

Helical transmembrane passes span 1 to 21, 37 to 57, 68 to 88, 111 to 131, 147 to 167, and 179 to 199; these read MISYYFQGFALGAAMILPLGP, LMIALLCALSDLVLISAGIFG, LLALVTWGGVAFLLWYGFGAL, IIATMLAVTWLNPHVYLDTFV, WFALGTISASFLWFFGLALLA, and AQRIINILVGVVMWLIAFQLA.

This sequence belongs to the LysE/ArgO transporter (TC 2.A.75) family.

It is found in the cell inner membrane. It carries out the reaction L-arginine(in) = L-arginine(out). In terms of biological role, involved in the export of arginine. Important to control the intracellular level of arginine and the correct balance between arginine and lysine. The protein is Arginine exporter protein ArgO of Salmonella paratyphi C (strain RKS4594).